Reading from the N-terminus, the 721-residue chain is Mitogen-activated protein kinase 6 (721 aa).

A Peptide (Met-Gly) (interchain with G-Cter in ubiquitin) cross-link involves residue Met1. One can recognise a Protein kinase domain in the interval 20–316; sequence YMDLKPLGCG…AEEALSHPYM (297 aa). ATP-binding positions include 26–34 and Lys49; that span reads LGCGGNGLV. Asp152 (proton acceptor) is an active-site residue. Phosphoserine; by PAK1, PAK2 and PAK3 is present on Ser189. An SEG motif motif is present at residues 189-191; sequence SEG. The FRIEDE motif motif lies at 332 to 337; that stretch reads FHIEDE. Residues Ser386, Ser452, Ser556, Ser558, Ser665, and Ser684 each carry the phosphoserine modification. Residues 701 to 715 show a composition bias toward polar residues; sequence AMKSSPQIPHQTYSS. Residues 701 to 721 form a disordered region; it reads AMKSSPQIPHQTYSSILKHLN.

It belongs to the protein kinase superfamily. CMGC Ser/Thr protein kinase family. MAP kinase subfamily. In terms of assembly, heterodimer with ERK4/MAPK4. Interacts with (via FRIEDE motif) MAPKAPK5. Interacts with UBE3A; this interaction may be indirect and mediated by HERC2, possibly via HERC2 interaction with NEURL4. Requires Mg(2+) as cofactor. Phosphorylated at Ser-189 by PAK1, PAK2 and PAK3 resulting in catalytic activation. Phosphorylated by MAPKAPK5 at other sites. In terms of processing, ubiquitination at Met-1 leads to degradation by the proteasome pathway.

Its subcellular location is the cytoplasm. It localises to the nucleus. It catalyses the reaction L-seryl-[protein] + ATP = O-phospho-L-seryl-[protein] + ADP + H(+). The catalysed reaction is L-threonyl-[protein] + ATP = O-phospho-L-threonyl-[protein] + ADP + H(+). With respect to regulation, activated by phosphorylation at Ser-189. In terms of biological role, atypical MAPK protein. Phosphorylates microtubule-associated protein 2 (MAP2) and MAPKAPK5. The precise role of the complex formed with MAPKAPK5 is still unclear, but the complex follows a complex set of phosphorylation events: upon interaction with atypical MAPKAPK5, ERK3/MAPK6 is phosphorylated at Ser-189 and then mediates phosphorylation and activation of MAPKAPK5, which in turn phosphorylates ERK3/MAPK6. May promote entry in the cell cycle. This Pongo abelii (Sumatran orangutan) protein is Mitogen-activated protein kinase 6 (MAPK6).